A 160-amino-acid polypeptide reads, in one-letter code: MKVMVIQGPNINMLGVRETHIYGNMKMEDIHEQMKQAAKQANVEIEFFQSNFEGELVDKIQECLGSVDGVIINAAAYAHTSIAIRDAITAINMPVIEVHISNTYRREEFRQKSMIAPVCAGSVVGFGPFGYHMALMGLFQIFDQINAYKAAQAKAQQANQ.

The active-site Proton acceptor is the tyrosine 22. Substrate-binding residues include asparagine 73, histidine 79, and aspartate 86. The active-site Proton donor is the histidine 99. Residues 100–101 (IS) and arginine 110 each bind substrate.

The protein belongs to the type-II 3-dehydroquinase family. Homododecamer.

It carries out the reaction 3-dehydroquinate = 3-dehydroshikimate + H2O. It participates in metabolic intermediate biosynthesis; chorismate biosynthesis; chorismate from D-erythrose 4-phosphate and phosphoenolpyruvate: step 3/7. Its function is as follows. Catalyzes a trans-dehydration via an enolate intermediate. The chain is 3-dehydroquinate dehydratase from Campylobacter lari (strain RM2100 / D67 / ATCC BAA-1060).